A 404-amino-acid polypeptide reads, in one-letter code: Glucose-1-phosphate adenylyltransferase (404 aa).

Residues tyrosine 99, glycine 164, 179–180, and serine 197 each bind alpha-D-glucose 1-phosphate; that span reads EK.

This sequence belongs to the bacterial/plant glucose-1-phosphate adenylyltransferase family. Homotetramer.

It carries out the reaction alpha-D-glucose 1-phosphate + ATP + H(+) = ADP-alpha-D-glucose + diphosphate. It functions in the pathway glycan biosynthesis; glycogen biosynthesis. Functionally, involved in the biosynthesis of ADP-glucose, a building block required for the elongation reactions to produce glycogen. Catalyzes the reaction between ATP and alpha-D-glucose 1-phosphate (G1P) to produce pyrophosphate and ADP-Glc. In Rhodococcus erythropolis (strain PR4 / NBRC 100887), this protein is Glucose-1-phosphate adenylyltransferase.